The following is a 389-amino-acid chain: tRNA-specific 2-thiouridylase MnmA (389 aa).

ATP is bound by residues 35 to 42 (GMSGGVDS) and methionine 61. Residues 121–123 (NPD) are interaction with target base in tRNA. The active-site Nucleophile is the cysteine 126. Cysteine 126 and cysteine 223 are oxidised to a cystine. Glycine 151 contacts ATP. Residues 173 to 175 (KDQ) form an interaction with tRNA region. Cysteine 223 serves as the catalytic Cysteine persulfide intermediate. The interaction with tRNA stretch occupies residues 335–336 (RY).

Belongs to the MnmA/TRMU family.

Its subcellular location is the cytoplasm. The enzyme catalyses S-sulfanyl-L-cysteinyl-[protein] + uridine(34) in tRNA + AH2 + ATP = 2-thiouridine(34) in tRNA + L-cysteinyl-[protein] + A + AMP + diphosphate + H(+). Functionally, catalyzes the 2-thiolation of uridine at the wobble position (U34) of tRNA, leading to the formation of s(2)U34. This is tRNA-specific 2-thiouridylase MnmA from Actinobacillus pleuropneumoniae serotype 5b (strain L20).